The primary structure comprises 124 residues: Aspartate 1-decarboxylase (124 aa).

Residue Ser-21 is the Schiff-base intermediate with substrate; via pyruvic acid of the active site. At Ser-21 the chain carries Pyruvic acid (Ser). Thr-53 is a substrate binding site. Catalysis depends on Tyr-54, which acts as the Proton donor. Position 69 to 71 (69 to 71 (GAA)) interacts with substrate.

The protein belongs to the PanD family. Heterooctamer of four alpha and four beta subunits. Pyruvate is required as a cofactor. In terms of processing, is synthesized initially as an inactive proenzyme, which is activated by self-cleavage at a specific serine bond to produce a beta-subunit with a hydroxyl group at its C-terminus and an alpha-subunit with a pyruvoyl group at its N-terminus.

It localises to the cytoplasm. The catalysed reaction is L-aspartate + H(+) = beta-alanine + CO2. The protein operates within cofactor biosynthesis; (R)-pantothenate biosynthesis; beta-alanine from L-aspartate: step 1/1. Catalyzes the pyruvoyl-dependent decarboxylation of aspartate to produce beta-alanine. The chain is Aspartate 1-decarboxylase from Dehalococcoides mccartyi (strain CBDB1).